The primary structure comprises 181 residues: MLSKFLTMEYLVHPGTLSLAAGVACGMCLGWGLRSHLGMFPQNSTSEANRDTETGTEASILGESGEYKMILVVRTDLKMGKGKVAAQCSHAAVSAYKQTQRRSPQVLKEWEYCGQPKVVVKAPDEDTLIQLLTHAKTLGLTVSLIQDAGRTQIEPGSRTVLGIGPGPVELIDEVTGHLKLY.

Residues 10-32 (YLVHPGTLSLAAGVACGMCLGWG) traverse the membrane as a helical segment. Glycyl lysine isopeptide (Lys-Gly) (interchain with G-Cter in ubiquitin) cross-links involve residues lysine 78, lysine 83, lysine 97, lysine 108, lysine 117, and lysine 179.

This sequence belongs to the PTH2 family. In terms of assembly, monomer. In terms of processing, ubiquitinated by PRKN during mitophagy, leading to its degradation and enhancement of mitophagy. Deubiquitinated by USP30.

The protein resides in the mitochondrion outer membrane. It carries out the reaction an N-acyl-L-alpha-aminoacyl-tRNA + H2O = an N-acyl-L-amino acid + a tRNA + H(+). Peptidyl-tRNA hydrolase which releases tRNAs from the ribosome during protein synthesis. Promotes caspase-independent apoptosis by regulating the function of two transcriptional regulators, AES and TLE1. The protein is Peptidyl-tRNA hydrolase 2, mitochondrial (Ptrh2) of Mus musculus (Mouse).